Here is a 716-residue protein sequence, read N- to C-terminus: Polyribonucleotide nucleotidyltransferase (716 aa).

2 residues coordinate Mg(2+): Asp-488 and Asp-494. A KH domain is found at 555 to 614 (PKIETITIPTDKIREVIGTGGKVIREIVATTGAKVDINDEGTVKVSASDGAKIKAAIDWI). An S1 motif domain is found at 624–692 (GAIYDGKVVK…DRGKTKLSMK (69 aa)). The disordered stretch occupies residues 695–716 (DQETGEDLSKKEAVSPEEAVNT).

Belongs to the polyribonucleotide nucleotidyltransferase family. Mg(2+) is required as a cofactor.

The protein resides in the cytoplasm. It carries out the reaction RNA(n+1) + phosphate = RNA(n) + a ribonucleoside 5'-diphosphate. Functionally, involved in mRNA degradation. Catalyzes the phosphorolysis of single-stranded polyribonucleotides processively in the 3'- to 5'-direction. This is Polyribonucleotide nucleotidyltransferase from Caulobacter sp. (strain K31).